The following is a 132-amino-acid chain: Small ribosomal subunit protein uS8 (132 aa).

The protein belongs to the universal ribosomal protein uS8 family. In terms of assembly, part of the 30S ribosomal subunit. Contacts proteins S5 and S12.

One of the primary rRNA binding proteins, it binds directly to 16S rRNA central domain where it helps coordinate assembly of the platform of the 30S subunit. In Clostridioides difficile (strain 630) (Peptoclostridium difficile), this protein is Small ribosomal subunit protein uS8.